The chain runs to 105 residues: Small ribosomal subunit protein uS17 (105 aa).

The protein belongs to the universal ribosomal protein uS17 family. In terms of assembly, part of the 30S ribosomal subunit.

One of the primary rRNA binding proteins, it binds specifically to the 5'-end of 16S ribosomal RNA. The protein is Small ribosomal subunit protein uS17 of Thermus thermophilus (strain ATCC BAA-163 / DSM 7039 / HB27).